A 228-amino-acid polypeptide reads, in one-letter code: Lipoprotein-releasing system ATP-binding protein LolD (228 aa).

Residues 6 to 225 (LEAKDVYKHF…ILHMQDGLWV (220 aa)) enclose the ABC transporter domain. 42 to 49 (GASGSGKS) provides a ligand contact to ATP.

Belongs to the ABC transporter superfamily. Lipoprotein translocase (TC 3.A.1.125) family. The complex is composed of two ATP-binding proteins (LolD) and two transmembrane proteins (LolC and LolE).

It is found in the cell inner membrane. Its function is as follows. Part of the ABC transporter complex LolCDE involved in the translocation of mature outer membrane-directed lipoproteins, from the inner membrane to the periplasmic chaperone, LolA. Responsible for the formation of the LolA-lipoprotein complex in an ATP-dependent manner. The polypeptide is Lipoprotein-releasing system ATP-binding protein LolD (Acinetobacter baylyi (strain ATCC 33305 / BD413 / ADP1)).